We begin with the raw amino-acid sequence, 968 residues long: RNA polymerase-associated protein RapA (968 aa).

The Helicase ATP-binding domain occupies 164-334 (DVGRRHAPRV…FARLRLLDPN (171 aa)). An ATP-binding site is contributed by 177-184 (DEVGLGKT). Positions 280-283 (DEAH) match the DEAH box motif. A Helicase C-terminal domain is found at 490 to 685 (RVEWLMGYLT…ALKAQLEQGR (196 aa)).

Belongs to the SNF2/RAD54 helicase family. RapA subfamily. Interacts with the RNAP. Has a higher affinity for the core RNAP than for the holoenzyme. Its ATPase activity is stimulated by binding to RNAP.

Functionally, transcription regulator that activates transcription by stimulating RNA polymerase (RNAP) recycling in case of stress conditions such as supercoiled DNA or high salt concentrations. Probably acts by releasing the RNAP, when it is trapped or immobilized on tightly supercoiled DNA. Does not activate transcription on linear DNA. Probably not involved in DNA repair. This chain is RNA polymerase-associated protein RapA, found in Salmonella paratyphi C (strain RKS4594).